The chain runs to 149 residues: UPF0179 protein Mbar_A0292 (149 aa).

The protein belongs to the UPF0179 family.

This chain is UPF0179 protein Mbar_A0292, found in Methanosarcina barkeri (strain Fusaro / DSM 804).